The chain runs to 266 residues: uncharacterized protein (266 aa).

Residues 35–131 (VLVGEGVLVK…WMLHIERCVT (97 aa)) enclose the PH domain. The segment at 152-212 (DGEAVKCMVC…VCDHCFDSLS (61 aa)) adopts an FYVE-type zinc-finger fold. 8 residues coordinate Zn(2+): C158, C161, C175, C178, C183, C186, C204, and C207. The segment at 213-266 (SATPGQEESEPKTGNRLHHEDSSSDSEDEVNGSGRSSNESRPTFYREDVQQPAT) is disordered. 2 stretches are compositionally biased toward basic and acidic residues: residues 221–234 (SEPKTGNRLHHEDS) and 256–266 (FYREDVQQPAT).

This is an uncharacterized protein from Caenorhabditis elegans.